Consider the following 569-residue polypeptide: Falcipain-1 (569 aa).

The Cytoplasmic segment spans residues 1-35 (MVAIKEMKEFAFARPSLVETLNKKKKFLKKKEKRT). A propeptide spans 1–332 (MVAIKEMKEF…KRNEKDIFSK (332 aa)) (activation peptide). A helical; Signal-anchor for type II membrane protein transmembrane segment spans residues 36–56 (FVLSIYAFITFIIFCIGILYF). Over 57–569 (TNKSSAHNNN…IGEEVFYPIL (513 aa)) the chain is Lumenal. Residues Asn-58, Asn-98, Asn-121, and Asn-127 are each glycosylated (N-linked (GlcNAc...) asparagine). The tract at residues 97 to 118 (LNESSNEEDEEKYTLNSETYNN) is disordered. Cystine bridges form between Cys-354/Cys-395, Cys-388/Cys-428, and Cys-413/Cys-433. Cys-357 is a catalytic residue. Asn-479 and Asn-487 each carry an N-linked (GlcNAc...) asparagine glycan. Cys-482 and Cys-558 are oxidised to a cystine. Active-site residues include His-488 and Asn-533.

The protein belongs to the peptidase C1 family. Contains disulfide bonds.

The protein localises to the membrane. It localises to the cytoplasmic granule. Its function is as follows. Cysteine protease. In the mosquito midgut, required for parasite development. The polypeptide is Falcipain-1 (Plasmodium falciparum (isolate 3D7)).